Reading from the N-terminus, the 192-residue chain is UPF0301 protein Bcep1808_0798 (192 aa).

The protein belongs to the UPF0301 (AlgH) family.

In Burkholderia vietnamiensis (strain G4 / LMG 22486) (Burkholderia cepacia (strain R1808)), this protein is UPF0301 protein Bcep1808_0798.